The primary structure comprises 590 residues: Aspartate--tRNA(Asp/Asn) ligase (590 aa).

L-aspartate is bound at residue E172. Residues 196 to 199 (QLFK) form an aspartate region. R218 is a binding site for L-aspartate. ATP-binding positions include 218–220 (RDE) and Q227. H449 serves as a coordination point for L-aspartate. Position 484 (E484) interacts with ATP. R491 contacts L-aspartate. 536–539 (GVDR) contacts ATP.

Belongs to the class-II aminoacyl-tRNA synthetase family. Type 1 subfamily. As to quaternary structure, homodimer.

It localises to the cytoplasm. It catalyses the reaction tRNA(Asx) + L-aspartate + ATP = L-aspartyl-tRNA(Asx) + AMP + diphosphate. Its function is as follows. Aspartyl-tRNA synthetase with relaxed tRNA specificity since it is able to aspartylate not only its cognate tRNA(Asp) but also tRNA(Asn). Reaction proceeds in two steps: L-aspartate is first activated by ATP to form Asp-AMP and then transferred to the acceptor end of tRNA(Asp/Asn). This chain is Aspartate--tRNA(Asp/Asn) ligase, found in Francisella tularensis subsp. holarctica (strain FTNF002-00 / FTA).